Reading from the N-terminus, the 138-residue chain is ATP synthase epsilon chain (138 aa).

The protein belongs to the ATPase epsilon chain family. F-type ATPases have 2 components, CF(1) - the catalytic core - and CF(0) - the membrane proton channel. CF(1) has five subunits: alpha(3), beta(3), gamma(1), delta(1), epsilon(1). CF(0) has three main subunits: a, b and c.

It is found in the cellular thylakoid membrane. Produces ATP from ADP in the presence of a proton gradient across the membrane. The sequence is that of ATP synthase epsilon chain from Microcystis aeruginosa (strain NIES-843 / IAM M-2473).